The following is a 426-amino-acid chain: Glutamyl-tRNA reductase (426 aa).

Residues 50-53 (TCNR), Ser-108, 113-115 (EPQ), and Gln-119 contribute to the substrate site. The Nucleophile role is filled by Cys-51. Position 188–193 (188–193 (GAGEMI)) interacts with NADP(+).

It belongs to the glutamyl-tRNA reductase family. As to quaternary structure, homodimer.

It catalyses the reaction (S)-4-amino-5-oxopentanoate + tRNA(Glu) + NADP(+) = L-glutamyl-tRNA(Glu) + NADPH + H(+). Its pathway is porphyrin-containing compound metabolism; protoporphyrin-IX biosynthesis; 5-aminolevulinate from L-glutamyl-tRNA(Glu): step 1/2. Catalyzes the NADPH-dependent reduction of glutamyl-tRNA(Glu) to glutamate 1-semialdehyde (GSA). This Polaromonas sp. (strain JS666 / ATCC BAA-500) protein is Glutamyl-tRNA reductase.